The primary structure comprises 222 residues: Sigma non-opioid intracellular receptor 1 (222 aa).

Over 1 to 6 (MSLIRT) the chain is Lumenal. Residues 7-29 (ILKLVVVVGFLSLTVQFIRHWMA) traverse the membrane as a helical segment. Over 30–222 (NKQYVFTKEE…STFLTESGVL (193 aa)) the chain is Cytoplasmic. An important for ligand-binding region spans residues 97–104 (SLTEYVLL). Positions 175 to 222 (FIPSTLGFALADTMFSTQDFLTLFYTARVYVKGMILEASTFLTESGVL) are C-terminal hydrophobic region.

This sequence belongs to the ERG2 family. Homotrimer.

It localises to the nucleus inner membrane. Its subcellular location is the nucleus outer membrane. The protein resides in the nucleus envelope. The protein localises to the cytoplasmic vesicle. It is found in the endoplasmic reticulum membrane. It localises to the membrane. May function in lipid transport from the endoplasmic reticulum and be involved in a wide array of cellular functions probably through regulation of the biogenesis of lipid microdomains at the plasma membrane. May regulate calcium efflux at the endoplasmic reticulum. This is Sigma non-opioid intracellular receptor 1 (sigmar1) from Danio rerio (Zebrafish).